The sequence spans 707 residues: Pheromone-processing carboxypeptidase KEX1 (707 aa).

An N-terminal signal peptide occupies residues methionine 1–alanine 17. Residues isoleucine 18–arginine 564 lie on the Lumenal side of the membrane. N-linked (GlcNAc...) asparagine glycosylation is found at asparagine 64 and asparagine 121. Serine 183 is a catalytic residue. Residues asparagine 293 and asparagine 378 are each glycosylated (N-linked (GlcNAc...) asparagine). Aspartate 393 is a catalytic residue. N-linked (GlcNAc...) asparagine glycans are attached at residues asparagine 440 and asparagine 448. Histidine 451 is an active-site residue. The disordered stretch occupies residues glycine 496–serine 557. Basic and acidic residues predominate over residues glutamate 503–aspartate 533. Residues serine 536–serine 549 show a composition bias toward low complexity. Residues leucine 565 to tyrosine 585 traverse the membrane as a helical segment. Residues arginine 586 to serine 707 lie on the Cytoplasmic side of the membrane. The segment at asparagine 644–serine 707 is disordered. Residues serine 683–glutamate 694 show a composition bias toward acidic residues. The segment covering threonine 695 to serine 707 has biased composition (basic and acidic residues).

The protein belongs to the peptidase S10 family.

The protein resides in the golgi apparatus. The protein localises to the trans-Golgi network membrane. The catalysed reaction is Preferential release of a C-terminal arginine or lysine residue.. Functionally, protease with a carboxypeptidase B-like function involved in the C-terminal processing of the lysine and arginine residues from protein precursors. Promotes cell fusion and is involved in the programmed cell death. The polypeptide is Pheromone-processing carboxypeptidase KEX1 (KEX1) (Candida tropicalis (strain ATCC MYA-3404 / T1) (Yeast)).